Consider the following 405-residue polypeptide: Argininosuccinate synthase (405 aa).

ATP contacts are provided by residues Ala10 to Ser18 and Ala37. Tyr88 and Ser93 together coordinate L-citrulline. Gly118 is an ATP binding site. Residues Thr120, Asn124, and Asp125 each coordinate L-aspartate. L-citrulline is bound at residue Asn124. L-citrulline contacts are provided by Arg128, Ser179, Ser188, Glu264, and Tyr276.

The protein belongs to the argininosuccinate synthase family. Type 1 subfamily. As to quaternary structure, homotetramer.

The protein resides in the cytoplasm. It carries out the reaction L-citrulline + L-aspartate + ATP = 2-(N(omega)-L-arginino)succinate + AMP + diphosphate + H(+). The protein operates within amino-acid biosynthesis; L-arginine biosynthesis; L-arginine from L-ornithine and carbamoyl phosphate: step 2/3. In Pseudomonas fluorescens (strain ATCC BAA-477 / NRRL B-23932 / Pf-5), this protein is Argininosuccinate synthase.